We begin with the raw amino-acid sequence, 119 residues long: Basic phospholipase A2 (119 aa).

Cystine bridges form between cysteine 11/cysteine 72, cysteine 27/cysteine 118, cysteine 29/cysteine 45, cysteine 44/cysteine 100, cysteine 51/cysteine 93, cysteine 61/cysteine 86, and cysteine 79/cysteine 91. The Ca(2+) site is built by tyrosine 28, glycine 30, and glycine 32. Histidine 48 is an active-site residue. Ca(2+) is bound at residue aspartate 49. N-linked (GlcNAc...) asparagine glycosylation is present at asparagine 82. Residue aspartate 94 is part of the active site.

Belongs to the phospholipase A2 family. Group I subfamily. D49 sub-subfamily. Requires Ca(2+) as cofactor. In terms of tissue distribution, expressed by the venom gland.

The protein localises to the secreted. It catalyses the reaction a 1,2-diacyl-sn-glycero-3-phosphocholine + H2O = a 1-acyl-sn-glycero-3-phosphocholine + a fatty acid + H(+). Its function is as follows. Snake venom phospholipase A2 (PLA2) that shows weak myotoxicity and induces edema in mice. Shows no cytotoxicity in vitro. Has an anticoagulant effect in vitro. PLA2 catalyzes the calcium-dependent hydrolysis of the 2-acyl groups in 3-sn-phosphoglycerides. This is Basic phospholipase A2 from Micrurus mipartitus (Red-tailed coral snake).